Consider the following 145-residue polypeptide: Large-conductance mechanosensitive channel (145 aa).

2 helical membrane passes run 30–50 (VAVV…AWLM) and 74–94 (GELV…FLII).

It belongs to the MscL family. Homopentamer.

The protein localises to the cell inner membrane. Functionally, channel that opens in response to stretch forces in the membrane lipid bilayer. May participate in the regulation of osmotic pressure changes within the cell. The chain is Large-conductance mechanosensitive channel from Synechocystis sp. (strain ATCC 27184 / PCC 6803 / Kazusa).